A 141-amino-acid polypeptide reads, in one-letter code: Nucleoside diphosphate kinase (141 aa).

ATP is bound by residues Lys11, Phe59, Arg87, Thr93, Arg104, and Asn114. The active-site Pros-phosphohistidine intermediate is the His117.

This sequence belongs to the NDK family. In terms of assembly, homotetramer. Mg(2+) serves as cofactor.

Its subcellular location is the cytoplasm. The catalysed reaction is a 2'-deoxyribonucleoside 5'-diphosphate + ATP = a 2'-deoxyribonucleoside 5'-triphosphate + ADP. The enzyme catalyses a ribonucleoside 5'-diphosphate + ATP = a ribonucleoside 5'-triphosphate + ADP. In terms of biological role, major role in the synthesis of nucleoside triphosphates other than ATP. The ATP gamma phosphate is transferred to the NDP beta phosphate via a ping-pong mechanism, using a phosphorylated active-site intermediate. The sequence is that of Nucleoside diphosphate kinase from Delftia acidovorans (strain DSM 14801 / SPH-1).